Reading from the N-terminus, the 633-residue chain is DNA mismatch repair protein MutL (633 aa).

This sequence belongs to the DNA mismatch repair MutL/HexB family.

This protein is involved in the repair of mismatches in DNA. It is required for dam-dependent methyl-directed DNA mismatch repair. May act as a 'molecular matchmaker', a protein that promotes the formation of a stable complex between two or more DNA-binding proteins in an ATP-dependent manner without itself being part of a final effector complex. The polypeptide is DNA mismatch repair protein MutL (Pseudomonas fluorescens (strain SBW25)).